Consider the following 479-residue polypeptide: MAWNTNLRWRLPLTCLLLQVAMVILFGVFVRYDFDADAHWWTERKHKNLSEVENEFYYRYPSFQDVHVMVFVGFGFLMTFLQRYGFSAVGFNFLLAAFGIQWALLMQGWFHFLEGRYIVVGVENLINADFCVASVCVAFGAVLGKVSPIQLLIMTFFQVTLFAVNEFILLNLLKVKDAGGSMTIHTFYAYFELTVTRILYRRNLEQSKERQSSAYQSDLFAMIGTLFLWMYWPSFNSAISYHGDSQHRAAINTYCSLAACVLTSVAVSSALHKKGKLDMVHIQNATLAGGVAVGTTAEMMLMPYGALIIGFICGIISTLGFVYLTPFLESRLHIQDTCGINNLHGIPGIIGGIVGAVTAASASLEVYGKEGLVHSFDFQDFKRDWTARTQGKFQIYGLLVTLAMALMGGIIVGLILRLPFWGQPSDENCFEDAVYWEMPEGNSTVYIPEDPTFKPSGPSVPSVPMVSPLPMASSVPLVP.

Residues 1–9 lie on the Cytoplasmic side of the membrane; sequence MAWNTNLRW. A helical membrane pass occupies residues 10-30; it reads RLPLTCLLLQVAMVILFGVFV. At 31 to 60 the chain is on the extracellular side; the sequence is RYDFDADAHWWTERKHKNLSEVENEFYYRY. The N-linked (GlcNAc...) asparagine glycan is linked to Asn-48. The helical transmembrane segment at 61 to 81 threads the bilayer; it reads PSFQDVHVMVFVGFGFLMTFL. Topologically, residues 82-85 are cytoplasmic; that stretch reads QRYG. A helical membrane pass occupies residues 86–106; sequence FSAVGFNFLLAAFGIQWALLM. The Extracellular segment spans residues 107–123; it reads QGWFHFLEGRYIVVGVE. The chain crosses the membrane as a helical span at residues 124-144; sequence NLINADFCVASVCVAFGAVLG. Residues 145-148 lie on the Cytoplasmic side of the membrane; that stretch reads KVSP. A helical membrane pass occupies residues 149–169; it reads IQLLIMTFFQVTLFAVNEFIL. Over 170-177 the chain is Extracellular; it reads LNLLKVKD. A helical transmembrane segment spans residues 178–200; it reads AGGSMTIHTFYAYFELTVTRILY. At 201-218 the chain is on the cytoplasmic side; that stretch reads RRNLEQSKERQSSAYQSD. A helical transmembrane segment spans residues 219 to 239; the sequence is LFAMIGTLFLWMYWPSFNSAI. The Extracellular segment spans residues 240-250; the sequence is SYHGDSQHRAA. A helical transmembrane segment spans residues 251–271; that stretch reads INTYCSLAACVLTSVAVSSAL. The Cytoplasmic segment spans residues 272-281; the sequence is HKKGKLDMVH. A helical membrane pass occupies residues 282-302; it reads IQNATLAGGVAVGTTAEMMLM. Residue Pro-303 is a topological domain, extracellular. A helical membrane pass occupies residues 304 to 324; it reads YGALIIGFICGIISTLGFVYL. The Cytoplasmic segment spans residues 325-345; the sequence is TPFLESRLHIQDTCGINNLHG. Residues 346-366 form a helical membrane-spanning segment; that stretch reads IPGIIGGIVGAVTAASASLEV. Residues 367-394 are Extracellular-facing; it reads YGKEGLVHSFDFQDFKRDWTARTQGKFQ. A helical membrane pass occupies residues 395 to 415; that stretch reads IYGLLVTLAMALMGGIIVGLI. The Cytoplasmic portion of the chain corresponds to 416–479; that stretch reads LRLPFWGQPS…PMASSVPLVP (64 aa).

It belongs to the ammonium transporter (TC 2.A.49) family. Rh subfamily. As to quaternary structure, homotrimer. In terms of processing, N-glycosylated.

The protein localises to the apical cell membrane. The enzyme catalyses NH4(+)(in) = NH4(+)(out). The catalysed reaction is methylamine(out) = methylamine(in). It catalyses the reaction CO2(out) = CO2(in). Ammonium transporter involved in the maintenance of acid-base homeostasis. Transports ammonium and its related derivative methylammonium across the plasma membrane of epithelial cells likely contributing to renal transepithelial ammonia transport and ammonia metabolism. Postulated to primarily mediate an electroneutral bidirectional transport of NH3 ammonia species according to a mechanism that implies interaction of an NH4(+) ion with acidic residues of the pore entry followed by dissociation of NH4(+) into NH3 and H(+). As a result NH3 transits through the central pore and is protonated on the extracellular side reforming NH4(+). May act as a CO2 channel providing for renal acid secretion. This is Ammonium transporter Rh type C (RHCG) from Macaca mulatta (Rhesus macaque).